A 287-amino-acid polypeptide reads, in one-letter code: UPF0725 protein At1g19060 (287 aa).

It belongs to the UPF0725 (EMB2204) family.

The chain is UPF0725 protein At1g19060 from Arabidopsis thaliana (Mouse-ear cress).